Here is a 292-residue protein sequence, read N- to C-terminus: Transcription factor HFR1 (292 aa).

Positions 114-153 (KRRIQVLSSDDESEEFTREVPSVTRKGSKRRRRDEKMSNK) are disordered. The tract at residues 134–147 (PSVTRKGSKRRRRD) is basic motif; degenerate. One can recognise a bHLH domain in the interval 134-183 (PSVTRKGSKRRRRDEKMSNKMRKLQQLVPNCHKTDKVSVLDKTIEYMKNL). Residues 139-153 (KGSKRRRRDEKMSNK) show a composition bias toward basic residues. Residues 141–148 (SKRRRRDE) carry the Nuclear localization signal motif. A helix-loop-helix motif region spans residues 148 to 183 (EKMSNKMRKLQQLVPNCHKTDKVSVLDKTIEYMKNL).

As to quaternary structure, binds to FHY1 and FHL. Forms PHYA/FHY1/HFR1 complex. Homodimer and heterodimer with PIF3. Do not interact alone with either phytochrome A (phyA) or B (phyB), but REP1/PIF3 complex binds to phyA and phyB, preferentially to the Pfr forms. Forms non-functional heterodimer with PRE6, causing liberation of PIF4 from the transcriptionally inactive complex HFR1-PIF4. Repressed when bound to PRE1, PRE2 and PRE4. In terms of tissue distribution, mainly expressed in fruits and flowers and, to a lower extent, in leaves, stems, seedlings and roots.

It localises to the nucleus. Its function is as follows. Atypical bHLH transcription factor that regulates photomorphogenesis through modulation of phytochrome (e.g. PHYA) and cryptochrome signalings. Suppresses the transcriptional regulation activity of PIF4 by forming non-DNA-binding heterodimer. The polypeptide is Transcription factor HFR1 (Arabidopsis thaliana (Mouse-ear cress)).